We begin with the raw amino-acid sequence, 216 residues long: Thiamine-phosphate synthase (216 aa).

4-amino-2-methyl-5-(diphosphooxymethyl)pyrimidine-binding positions include 39-43 (QLRRK) and Asn71. Positions 72 and 91 each coordinate Mg(2+). Residue Ser109 participates in 4-amino-2-methyl-5-(diphosphooxymethyl)pyrimidine binding. Residue 136 to 138 (SPT) coordinates 2-[(2R,5Z)-2-carboxy-4-methylthiazol-5(2H)-ylidene]ethyl phosphate. Lys139 is a 4-amino-2-methyl-5-(diphosphooxymethyl)pyrimidine binding site. Residues Gly172 and 192–193 (IT) each bind 2-[(2R,5Z)-2-carboxy-4-methylthiazol-5(2H)-ylidene]ethyl phosphate.

The protein belongs to the thiamine-phosphate synthase family. The cofactor is Mg(2+).

The enzyme catalyses 2-[(2R,5Z)-2-carboxy-4-methylthiazol-5(2H)-ylidene]ethyl phosphate + 4-amino-2-methyl-5-(diphosphooxymethyl)pyrimidine + 2 H(+) = thiamine phosphate + CO2 + diphosphate. It catalyses the reaction 2-(2-carboxy-4-methylthiazol-5-yl)ethyl phosphate + 4-amino-2-methyl-5-(diphosphooxymethyl)pyrimidine + 2 H(+) = thiamine phosphate + CO2 + diphosphate. It carries out the reaction 4-methyl-5-(2-phosphooxyethyl)-thiazole + 4-amino-2-methyl-5-(diphosphooxymethyl)pyrimidine + H(+) = thiamine phosphate + diphosphate. It functions in the pathway cofactor biosynthesis; thiamine diphosphate biosynthesis; thiamine phosphate from 4-amino-2-methyl-5-diphosphomethylpyrimidine and 4-methyl-5-(2-phosphoethyl)-thiazole: step 1/1. Its function is as follows. Condenses 4-methyl-5-(beta-hydroxyethyl)thiazole monophosphate (THZ-P) and 2-methyl-4-amino-5-hydroxymethyl pyrimidine pyrophosphate (HMP-PP) to form thiamine monophosphate (TMP). This Bordetella avium (strain 197N) protein is Thiamine-phosphate synthase.